Reading from the N-terminus, the 95-residue chain is Acylphosphatase (95 aa).

Residues 5–93 (RAHLYIKGKV…GEFQDFRILP (89 aa)) enclose the Acylphosphatase-like domain. Catalysis depends on residues arginine 20 and asparagine 38.

Belongs to the acylphosphatase family.

It catalyses the reaction an acyl phosphate + H2O = a carboxylate + phosphate + H(+). This chain is Acylphosphatase (acyP), found in Pyrobaculum islandicum (strain DSM 4184 / JCM 9189 / GEO3).